A 233-amino-acid chain; its full sequence is DKIVGPGNIYVATAKRAVFGQVGIDMVAGPSEILVVCDGATDPDWIAMDLFSQAEHDEDAQSILLSWDADFLDRVAASIERLLPSMERETIIATALRGRGAMILARDLDDAIAVANRIAPEHLELSVEDPQAIVGRIRHAGAIFMGRYTAEAIGDYCAGPNHVLPTSRTARFSSPLGVYDFQKRSSLIMASAAGAAQLAKTASVLARGEGLTAHARSAEYRGAVEPAAEPGLS.

Residues Ser31, Gln53, and His56 each contribute to the substrate site. Residues Gln53 and His56 each contribute to the Zn(2+) site. Active-site proton acceptor residues include Glu121 and His122. 4 residues coordinate substrate: His122, Asp155, Glu209, and His214. Asp155 serves as a coordination point for Zn(2+). His214 contributes to the Zn(2+) binding site.

This sequence belongs to the histidinol dehydrogenase family. The cofactor is Zn(2+).

The enzyme catalyses L-histidinol + 2 NAD(+) + H2O = L-histidine + 2 NADH + 3 H(+). The protein operates within amino-acid biosynthesis; L-histidine biosynthesis; L-histidine from 5-phospho-alpha-D-ribose 1-diphosphate: step 9/9. Catalyzes the sequential NAD-dependent oxidations of L-histidinol to L-histidinaldehyde and then to L-histidine. The protein is Histidinol dehydrogenase (hisD) of Thiocapsa roseopersicina.